The following is a 300-amino-acid chain: NAD kinase (300 aa).

Asp75 (proton acceptor) is an active-site residue. NAD(+)-binding positions include 75 to 76, 149 to 150, Arg177, Asp179, 190 to 195, Ala214, and Gln248; these read DG, ND, and TAYALS.

It belongs to the NAD kinase family. The cofactor is a divalent metal cation.

It is found in the cytoplasm. The catalysed reaction is NAD(+) + ATP = ADP + NADP(+) + H(+). Its function is as follows. Involved in the regulation of the intracellular balance of NAD and NADP, and is a key enzyme in the biosynthesis of NADP. Catalyzes specifically the phosphorylation on 2'-hydroxyl of the adenosine moiety of NAD to yield NADP. In Burkholderia lata (strain ATCC 17760 / DSM 23089 / LMG 22485 / NCIMB 9086 / R18194 / 383), this protein is NAD kinase.